The following is a 331-amino-acid chain: Very-long-chain 3-oxoacyl-CoA reductase (331 aa).

The chain crosses the membrane as a helical span at residues 15–35 (VQWALAGVGALYISAKVLSYL). Residues Val-60, Asp-115, Asp-123, Asn-142, Tyr-209, Lys-213, Ile-242, and Ser-244 each coordinate NADP(+). The Proton donor role is filled by Tyr-209. Residue Lys-213 is the Lowers pKa of active site Tyr of the active site.

The protein belongs to the short-chain dehydrogenases/reductases (SDR) family.

The protein localises to the endoplasmic reticulum membrane. It carries out the reaction a very-long-chain (3R)-3-hydroxyacyl-CoA + NADP(+) = a very-long-chain 3-oxoacyl-CoA + NADPH + H(+). It participates in lipid metabolism; fatty acid biosynthesis. Component of the microsomal membrane bound fatty acid elongation system, which produces the 26-carbon very long-chain fatty acids (VLCFA) from palmitate. Catalyzes the reduction of the 3-ketoacyl-CoA intermediate that is formed in each cycle of fatty acid elongation. VLCFAs serve as precursors for ceramide and sphingolipids. This is Very-long-chain 3-oxoacyl-CoA reductase from Pyricularia oryzae (strain 70-15 / ATCC MYA-4617 / FGSC 8958) (Rice blast fungus).